Reading from the N-terminus, the 190-residue chain is MDPLTVYKNSVKQQIDSADLLVANLVNENFVLSEKLDTKATEIKQLQKQIDSLNAQVKELKTQTSQQAENSEVIKDLYEYLCNVRVHKSYEDDSGLWFDISQGTHSGGSSDDYSIMDYKLGFVKGQAQVTEVIYAPVLKQRSTEELYSLQSKLPEYLFETLSFPLSSLNQFYNKIAKSLNKKREKKDETE.

Residues 31 to 70 (VLSEKLDTKATEIKQLQKQIDSLNAQVKELKTQTSQQAEN) adopt a coiled-coil conformation.

Component of the monopolin complex composed of at least CSM1, LRS4 and MAM1. The complex associates with the kinetochore. Interacts with CDC46, CDC47, GIC1, GIC2, MCM3 and NUR1.

The protein localises to the nucleus. The protein resides in the nucleolus. It is found in the chromosome. It localises to the centromere. Component of the monopolin complex which promotes monoorientation during meiosis I, required for chromosome segregation during meiosis. Also plays a mitotic role in DNA replication. The polypeptide is Monopolin complex subunit CSM1 (CSM1) (Saccharomyces cerevisiae (strain ATCC 204508 / S288c) (Baker's yeast)).